The sequence spans 124 residues: uncharacterized protein (124 aa).

Transmembrane regions (helical) follow at residues 14-34, 41-61, and 85-105; these read KAIV…YGWQ, FSYG…IIFY, and MVFI…AFFV.

Its subcellular location is the cell membrane. This is an uncharacterized protein from Haemophilus influenzae (strain ATCC 51907 / DSM 11121 / KW20 / Rd).